The primary structure comprises 202 residues: Neurensin-2 (202 aa).

Helical transmembrane passes span 65–85 and 116–136; these read VAVA…GYAV and VVGA…LFLI. Positions 162–202 are disordered; it reads RDEPEKLSPAFHETSSQSPFLTPPSPFGQQSVQTSQPQRDL. Residues 188-202 show a composition bias toward polar residues; that stretch reads FGQQSVQTSQPQRDL.

The protein belongs to the VMP family. Expressed specifically in brain where it is widely expressed, with highest levels of expression in thalamus and hypothalamus. In brain, found in neural cell bodies and detected in many regions of the limbic system, such as the septum nucleus, horizontal and vertical limbs of the diagonal band, hippocampus, amygdaloid nucleus, and habernula nucleus. Also localizes to small vesicles found in the perinuclear region of Neuro2a and PC12 cells.

The protein resides in the membrane. May play a role in maintenance and/or transport of vesicles. In Mus musculus (Mouse), this protein is Neurensin-2.